The following is a 185-amino-acid chain: Lactoylglutathione lyase (185 aa).

The disordered stretch occupies residues 1–22; the sequence is MASEARESPANNPGLSTNRDEA. In terms of domain architecture, VOC spans 27–174; that stretch reads IMQQTMFRIK…DGYWIEIFDL (148 aa). Gln30 and Arg34 together coordinate substrate. Gln30 lines the Zn(2+) pocket. Glu96 contacts Zn(2+). Residues Asn100, Arg120, His124, and 154–155 each bind substrate; that span reads KM. His124 lines the Zn(2+) pocket. Glu170 lines the Zn(2+) pocket. Glu170 acts as the Proton donor/acceptor in catalysis.

This sequence belongs to the glyoxalase I family. Requires Zn(2+) as cofactor.

The enzyme catalyses (R)-S-lactoylglutathione = methylglyoxal + glutathione. It functions in the pathway secondary metabolite metabolism; methylglyoxal degradation; (R)-lactate from methylglyoxal: step 1/2. In terms of biological role, catalyzes the conversion of hemimercaptal, formed from methylglyoxal and glutathione, to S-lactoylglutathione. This chain is Lactoylglutathione lyase, found in Arabidopsis thaliana (Mouse-ear cress).